The sequence spans 867 residues: Armadillo repeat-containing protein 2 (867 aa).

Disordered stretches follow at residues Met1–Phe115 and Thr214–Lys252. Polar residues-rich tracts occupy residues Pro18–Glu28, Val40–Glu50, and Ser60–Pro69. Low complexity-rich tracts occupy residues Ser70–Ser81 and Ser234–Ser243. ARM repeat units follow at residues Ile262 to Glu301, Asn304 to Val344, Glu363 to Phe403, Leu408 to Val449, Ser462 to Ser503, Asp506 to Ala547, Gln551 to Glu589, His591 to Ile616, Gly619 to Tyr662, Gln664 to Gln705, His707 to Val746, and Lys748 to Glu790.

Expressed at higher level in testis.

Its function is as follows. Required for sperm flagellum axoneme organization and function. Involved in axonemal central pair complex assembly and/or stability. This is Armadillo repeat-containing protein 2 from Homo sapiens (Human).